A 471-amino-acid polypeptide reads, in one-letter code: UDP-N-acetylmuramoylalanine--D-glutamate ligase (471 aa).

127–133 is an ATP binding site; the sequence is GSNGKST.

Belongs to the MurCDEF family.

Its subcellular location is the cytoplasm. It catalyses the reaction UDP-N-acetyl-alpha-D-muramoyl-L-alanine + D-glutamate + ATP = UDP-N-acetyl-alpha-D-muramoyl-L-alanyl-D-glutamate + ADP + phosphate + H(+). The protein operates within cell wall biogenesis; peptidoglycan biosynthesis. Functionally, cell wall formation. Catalyzes the addition of glutamate to the nucleotide precursor UDP-N-acetylmuramoyl-L-alanine (UMA). The sequence is that of UDP-N-acetylmuramoylalanine--D-glutamate ligase from Colwellia psychrerythraea (strain 34H / ATCC BAA-681) (Vibrio psychroerythus).